Consider the following 248-residue polypeptide: Triosephosphate isomerase (248 aa).

Positions 11 and 13 each coordinate substrate. The Electrophile role is filled by His95. Catalysis depends on Glu165, which acts as the Proton acceptor.

This sequence belongs to the triosephosphate isomerase family. In terms of assembly, homodimer.

The protein resides in the cytoplasm. The enzyme catalyses D-glyceraldehyde 3-phosphate = dihydroxyacetone phosphate. The catalysed reaction is dihydroxyacetone phosphate = methylglyoxal + phosphate. The protein operates within carbohydrate degradation; glycolysis; D-glyceraldehyde 3-phosphate from glycerone phosphate: step 1/1. It functions in the pathway carbohydrate biosynthesis; gluconeogenesis. Its function is as follows. Triosephosphate isomerase is an extremely efficient metabolic enzyme that catalyzes the interconversion between dihydroxyacetone phosphate (DHAP) and D-glyceraldehyde-3-phosphate (G3P) in glycolysis and gluconeogenesis. It is also responsible for the non-negligible production of methylglyoxal a reactive cytotoxic side-product that modifies and can alter proteins, DNA and lipids. The sequence is that of Triosephosphate isomerase (tpi1) from Oryzias latipes (Japanese rice fish).